We begin with the raw amino-acid sequence, 266 residues long: Putative carbamate hydrolase RutD (266 aa).

Belongs to the AB hydrolase superfamily. Hydrolase RutD family.

The catalysed reaction is carbamate + 2 H(+) = NH4(+) + CO2. Involved in pyrimidine catabolism. May facilitate the hydrolysis of carbamate, a reaction that can also occur spontaneously. This Escherichia coli O7:K1 (strain IAI39 / ExPEC) protein is Putative carbamate hydrolase RutD.